A 64-amino-acid polypeptide reads, in one-letter code: Translational regulator CsrA (64 aa).

This sequence belongs to the CsrA/RsmA family. As to quaternary structure, homodimer; the beta-strands of each monomer intercalate to form a hydrophobic core, while the alpha-helices form wings that extend away from the core.

Its subcellular location is the cytoplasm. Its function is as follows. A key translational regulator that binds mRNA to regulate translation initiation and/or mRNA stability. Mediates global changes in gene expression, shifting from rapid growth to stress survival by linking envelope stress, the stringent response and the catabolite repression systems. Usually binds in the 5'-UTR; binding at or near the Shine-Dalgarno sequence prevents ribosome-binding, repressing translation, binding elsewhere in the 5'-UTR can activate translation and/or stabilize the mRNA. Its function is antagonized by small RNA(s). The protein is Translational regulator CsrA of Thioalkalivibrio sulfidiphilus (strain HL-EbGR7).